Reading from the N-terminus, the 284-residue chain is ATP phosphoribosyltransferase (284 aa).

This sequence belongs to the ATP phosphoribosyltransferase family. Long subfamily. In terms of assembly, equilibrium between an active dimeric form, an inactive hexameric form and higher aggregates. Interconversion between the various forms is largely reversible and is influenced by the natural substrates and inhibitors of the enzyme. Requires Mg(2+) as cofactor.

Its subcellular location is the cytoplasm. The catalysed reaction is 1-(5-phospho-beta-D-ribosyl)-ATP + diphosphate = 5-phospho-alpha-D-ribose 1-diphosphate + ATP. It participates in amino-acid biosynthesis; L-histidine biosynthesis; L-histidine from 5-phospho-alpha-D-ribose 1-diphosphate: step 1/9. Its activity is regulated as follows. Feedback inhibited by histidine. Functionally, catalyzes the condensation of ATP and 5-phosphoribose 1-diphosphate to form N'-(5'-phosphoribosyl)-ATP (PR-ATP). Has a crucial role in the pathway because the rate of histidine biosynthesis seems to be controlled primarily by regulation of HisG enzymatic activity. In Mycobacterium bovis (strain ATCC BAA-935 / AF2122/97), this protein is ATP phosphoribosyltransferase (hisG).